A 360-amino-acid polypeptide reads, in one-letter code: Chorismate synthase (360 aa).

Residues 36-60 (LSEDDIQPDLDRRKPGTSKYTTPRR) form a disordered region. Residue Arg-48 participates in NADP(+) binding. Residues 125–127 (RSS), 246–247 (NA), Gly-286, 301–305 (KPTSS), and Arg-327 each bind FMN.

It belongs to the chorismate synthase family. Homotetramer. It depends on FMNH2 as a cofactor.

It carries out the reaction 5-O-(1-carboxyvinyl)-3-phosphoshikimate = chorismate + phosphate. Its pathway is metabolic intermediate biosynthesis; chorismate biosynthesis; chorismate from D-erythrose 4-phosphate and phosphoenolpyruvate: step 7/7. Catalyzes the anti-1,4-elimination of the C-3 phosphate and the C-6 proR hydrogen from 5-enolpyruvylshikimate-3-phosphate (EPSP) to yield chorismate, which is the branch point compound that serves as the starting substrate for the three terminal pathways of aromatic amino acid biosynthesis. This reaction introduces a second double bond into the aromatic ring system. The polypeptide is Chorismate synthase (Histophilus somni (strain 129Pt) (Haemophilus somnus)).